The sequence spans 446 residues: MKPVIALVGRPNVGKSTLFNRLTRSRDALVADLPGLTRDRHYGEGRVGGERPYLVVDTGGFEPVAKDGILFEMARQTRQAVEESDVIVFIVDGRNGLAPQDKSIADYLRKTGRPIFLVVNKAEGMKYTNVAADFYELGLGDPRAISAAHGDGVTEMINEALDVAYAGQPEESDEEKAQHGIKIAIVGRPNVGKSTLVNTLIGEDRVIAFDMPGTTRDSIYVDFERQGKKYTLIDTAGLRKRGKVFEAIEKFSVVKTLQSISDANVVILLLDARQDISEQDAHIAGFVVEQGRALVVGVNKWDGLDPHVRERTKSDLQRKLKFLEFAKFHFISAAEKTGIGPLMRSVDDAYKAAMSKLPTPKLTRALIEAVEFQQPRRRGPVRPKLRYAHQGGQNPPIIVIHGNALDAVTDTYKRYLENRFRETFALTGTPLRIEFRSSTNPYADKD.

2 consecutive EngA-type G domains span residues 3–168 (PVIA…YAGQ) and 181–354 (IKIA…KAAM). Residues 9-16 (GRPNVGKS), 57-61 (DTGGF), 120-123 (NKAE), 187-194 (GRPNVGKS), 234-238 (DTAGL), and 299-302 (NKWD) each bind GTP. The region spanning 355 to 439 (SKLPTPKLTR…PLRIEFRSST (85 aa)) is the KH-like domain.

This sequence belongs to the TRAFAC class TrmE-Era-EngA-EngB-Septin-like GTPase superfamily. EngA (Der) GTPase family. As to quaternary structure, associates with the 50S ribosomal subunit.

Its function is as follows. GTPase that plays an essential role in the late steps of ribosome biogenesis. In Paraburkholderia phymatum (strain DSM 17167 / CIP 108236 / LMG 21445 / STM815) (Burkholderia phymatum), this protein is GTPase Der.